The following is a 92-amino-acid chain: RQC P-site tRNA stabilizing factor (92 aa).

In terms of domain architecture, S4 RNA-binding spans 5-65 (MRLDKYLKVS…GPKIVTAKIE (61 aa)).

It belongs to the RqcP family. Associates with stalled 50S ribosomal subunits. Binds to RqcH, 23S rRNA and the P-site tRNA. Does not require RqcH for association with 50S subunits.

In terms of biological role, key component of the ribosome quality control system (RQC), a ribosome-associated complex that mediates the extraction of incompletely synthesized nascent chains from stalled ribosomes and their subsequent degradation. RqcH recruits Ala-charged tRNA, and with RqcP directs the elongation of stalled nascent chains on 50S ribosomal subunits, leading to non-templated C-terminal alanine extensions (Ala tail). The Ala tail promotes nascent chain degradation. RqcP is associated with the translocation-like movement of the peptidyl-tRNA from the A-site into the P-site. The polypeptide is RQC P-site tRNA stabilizing factor (Listeria innocua serovar 6a (strain ATCC BAA-680 / CLIP 11262)).